Reading from the N-terminus, the 368-residue chain is Cyclin-dependent kinase 2 (368 aa).

A Protein kinase domain is found at 45–330 (FCSLRRIGEG…AKGALSHRYF (286 aa)). ATP is bound by residues 51–59 (IGEGTYGVV) and Lys-74. Residue Asp-170 is the Proton acceptor of the active site. 2 residues coordinate Mg(2+): Asn-175 and Asp-188.

Belongs to the protein kinase superfamily. CMGC Ser/Thr protein kinase family. CDC2/CDKX subfamily. Interacts with cye-1; the interaction likely regulates cdk-2 activity and is probably required for gld-1 phosphorylation. Mg(2+) serves as cofactor.

The catalysed reaction is L-seryl-[protein] + ATP = O-phospho-L-seryl-[protein] + ADP + H(+). It carries out the reaction L-threonyl-[protein] + ATP = O-phospho-L-threonyl-[protein] + ADP + H(+). Its function is as follows. Serine/threonine-protein kinase which, in association with cye-1, regulates proliferation, quiescent state and cell fate during the development of several cell lineages. In the embryo, initiates the establishment of cell polarity through the recruitment of the centrosomal proteins spd-2 and spd-5 during prophase. Phosphorylation and inhibition of the translational repressor gld-1 by the cdk-2/cye-1 complex regulates the pool of germline stem cells and the size of the mitotic zone in the gonads by preventing entry into meiosis. The chain is Cyclin-dependent kinase 2 from Caenorhabditis elegans.